The sequence spans 176 residues: Endoribonuclease YbeY (176 aa).

Zn(2+)-binding residues include His117, His121, and His127.

This sequence belongs to the endoribonuclease YbeY family. The cofactor is Zn(2+).

The protein resides in the cytoplasm. In terms of biological role, single strand-specific metallo-endoribonuclease involved in late-stage 70S ribosome quality control and in maturation of the 3' terminus of the 16S rRNA. This Methylocella silvestris (strain DSM 15510 / CIP 108128 / LMG 27833 / NCIMB 13906 / BL2) protein is Endoribonuclease YbeY.